Here is a 232-residue protein sequence, read N- to C-terminus: uncharacterized protein (232 aa).

Positions 1 to 32 (MTTSKIATAFKTATFALAAGAVALGLASPADA) are cleaved as a signal peptide.

This is an uncharacterized protein from Mycobacterium bovis (strain ATCC BAA-935 / AF2122/97).